A 330-amino-acid chain; its full sequence is Mucin-15 (330 aa).

An N-terminal signal peptide occupies residues 1 to 23 (MLTSAKILLISILSSLLLFGSHG). A disordered region spans residues 23–115 (GEEGQKTNTT…SPRSPSTHSF (93 aa)). At 24–232 (EEGQKTNTTE…SDPQEENRNT (209 aa)) the chain is on the extracellular side. Residues Asn30, Asn44, Asn54, Asn71, Asn79, Asn89, Asn94, Asn122, Asn138, Asn147, Asn154, Asn162, Asn175, Asn214, and Asn221 are each glycosylated (N-linked (GlcNAc...) asparagine). Polar residues predominate over residues 42-56 (MENQSVPLESKANLT). Over residues 86-115 (FYSNLSTDNSSRSPSLMPTLSPRSPSTHSF) the composition is skewed to polar residues. Residues 164-185 (SITVSNLPSGPNTTSVTPMVTE) are disordered. A helical membrane pass occupies residues 233-253 (GVVFGAILGAILGASLLSLVG). Residues 254-330 (YLLCGKRKTD…DDIPPLRTSV (77 aa)) lie on the Cytoplasmic side of the membrane. The tract at residues 279–330 (LRLDNAPEPYDMSFGNSSYYNPTANDSSTSAGGENAHDSIPMDDIPPLRTSV) is disordered. Residues 292 to 310 (FGNSSYYNPTANDSSTSAG) show a composition bias toward polar residues.

Highly glycosylated (N- and O-linked carbohydrates). As to expression, mainly expressed on apical surfaces of the mammary epithelial cells.

The protein resides in the cell membrane. It is found in the secreted. The chain is Mucin-15 (MUC15) from Bos taurus (Bovine).